Consider the following 476-residue polypeptide: mRNA-capping enzyme subunit beta (476 aa).

The segment at 1-133 (MNVGSILNDE…KLKSTNKPRR (133 aa)) is disordered. Composition is skewed to basic and acidic residues over residues 51 to 67 (LKTK…EHSN) and 105 to 114 (HPIEQDKSEK). Residues 123 to 132 (SKLKSTNKPR) are compositionally biased toward basic residues.

Belongs to the fungal TPase family. As to quaternary structure, heterodimer. The mRNA-capping enzyme is composed of two separate chains alpha and beta, respectively a mRNA guanylyltransferase and an mRNA 5'-triphosphate monophosphatase. Mg(2+) serves as cofactor.

The protein resides in the nucleus. The enzyme catalyses a 5'-end triphospho-ribonucleoside in mRNA + H2O = a 5'-end diphospho-ribonucleoside in mRNA + phosphate + H(+). Its function is as follows. First step of mRNA capping. Converts the 5'-triphosphate end of a nascent mRNA chain into a diphosphate end. The protein is mRNA-capping enzyme subunit beta (CET1) of Debaryomyces hansenii (strain ATCC 36239 / CBS 767 / BCRC 21394 / JCM 1990 / NBRC 0083 / IGC 2968) (Yeast).